The following is a 335-amino-acid chain: NADH-quinone oxidoreductase subunit H (335 aa).

The next 8 membrane-spanning stretches (helical) occupy residues 11 to 31 (VIISVVKAIVILLAVVVAGAL), 81 to 101 (VIFTLAPVVAMSALLIAFAVI), 114 to 134 (IGLLFFFAMAGLSVYAVLFAG), 154 to 174 (VSYEVFMGLALMGIVVQVGSF), 187 to 207 (LWFIIPQFFGFCTFFIAGVAV), 238 to 258 (FFVGEYIGIILISALLVTLFF), 270 to 290 (QLAFFWFFLKTAFFIMLFILL), and 309 to 329 (FCLPLTLINLLVTAAVVLLNT).

This sequence belongs to the complex I subunit 1 family. NDH-1 is composed of 13 different subunits. Subunits NuoA, H, J, K, L, M, N constitute the membrane sector of the complex.

It is found in the cell inner membrane. The catalysed reaction is a quinone + NADH + 5 H(+)(in) = a quinol + NAD(+) + 4 H(+)(out). In terms of biological role, NDH-1 shuttles electrons from NADH, via FMN and iron-sulfur (Fe-S) centers, to quinones in the respiratory chain. The immediate electron acceptor for the enzyme in this species is believed to be ubiquinone. Couples the redox reaction to proton translocation (for every two electrons transferred, four hydrogen ions are translocated across the cytoplasmic membrane), and thus conserves the redox energy in a proton gradient. This subunit may bind ubiquinone. This chain is NADH-quinone oxidoreductase subunit H, found in Pseudomonas fluorescens (strain SBW25).